A 583-amino-acid polypeptide reads, in one-letter code: 1-deoxy-D-xylulose-5-phosphate synthase (583 aa).

Residues histidine 74 and 115 to 117 contribute to the thiamine diphosphate site; that span reads GHS. Residue aspartate 146 coordinates Mg(2+). Thiamine diphosphate-binding positions include 147 to 148, asparagine 175, phenylalanine 244, and glutamate 327; that span reads GG. Mg(2+) is bound at residue asparagine 175.

This sequence belongs to the transketolase family. DXPS subfamily. As to quaternary structure, homodimer. The cofactor is Mg(2+). Thiamine diphosphate serves as cofactor.

It catalyses the reaction D-glyceraldehyde 3-phosphate + pyruvate + H(+) = 1-deoxy-D-xylulose 5-phosphate + CO2. It functions in the pathway metabolic intermediate biosynthesis; 1-deoxy-D-xylulose 5-phosphate biosynthesis; 1-deoxy-D-xylulose 5-phosphate from D-glyceraldehyde 3-phosphate and pyruvate: step 1/1. Its function is as follows. Catalyzes the acyloin condensation reaction between C atoms 2 and 3 of pyruvate and glyceraldehyde 3-phosphate to yield 1-deoxy-D-xylulose-5-phosphate (DXP). The chain is 1-deoxy-D-xylulose-5-phosphate synthase from Myxococcus xanthus (strain DK1622).